Consider the following 347-residue polypeptide: Anthranilate phosphoribosyltransferase (347 aa).

5-phospho-alpha-D-ribose 1-diphosphate is bound by residues Gly88, 91–92 (GD), Thr96, 98–101 (NIST), 116–124 (KHGNRSVSS), and Ser128. Anthranilate is bound at residue Gly88. Residue Ser100 coordinates Mg(2+). Asn119 serves as a coordination point for anthranilate. Position 174 (Arg174) interacts with anthranilate. Mg(2+) contacts are provided by Asp232 and Glu233.

This sequence belongs to the anthranilate phosphoribosyltransferase family. In terms of assembly, homodimer. Mg(2+) is required as a cofactor.

It carries out the reaction N-(5-phospho-beta-D-ribosyl)anthranilate + diphosphate = 5-phospho-alpha-D-ribose 1-diphosphate + anthranilate. It participates in amino-acid biosynthesis; L-tryptophan biosynthesis; L-tryptophan from chorismate: step 2/5. Catalyzes the transfer of the phosphoribosyl group of 5-phosphorylribose-1-pyrophosphate (PRPP) to anthranilate to yield N-(5'-phosphoribosyl)-anthranilate (PRA). This chain is Anthranilate phosphoribosyltransferase, found in Shewanella sp. (strain MR-4).